Reading from the N-terminus, the 149-residue chain is Large ribosomal subunit protein uL11 (149 aa).

It belongs to the universal ribosomal protein uL11 family. In terms of assembly, part of the ribosomal stalk of the 50S ribosomal subunit. Interacts with L10 and the large rRNA to form the base of the stalk. L10 forms an elongated spine to which L12 dimers bind in a sequential fashion forming a multimeric L10(L12)X complex. In terms of processing, one or more lysine residues are methylated.

In terms of biological role, forms part of the ribosomal stalk which helps the ribosome interact with GTP-bound translation factors. The protein is Large ribosomal subunit protein uL11 of Methylobacterium sp. (strain 4-46).